We begin with the raw amino-acid sequence, 183 residues long: MTQYRGGYIASCYAQALFSVSDVNSICKDVEFVISVLENDNNVAMFLSSPRVSKESKISLIKVIGDYIDSILVKFMIIVIESNRGNILLQIFSAFLDLVRKYNKEVNISVTSCALLTKQEEEGICNALLERYGKVVGITNNLDPSILGGFIIRVNFDVIDVSLNSYLQSLRELSKMSVCSISE.

It belongs to the ATPase delta chain family. In terms of assembly, F-type ATPases have 2 components, F(1) - the catalytic core - and F(0) - the membrane proton channel. F(1) has five subunits: alpha(3), beta(3), gamma(1), delta(1), epsilon(1). F(0) has three main subunits: a(1), b(2) and c(10-14). The alpha and beta chains form an alternating ring which encloses part of the gamma chain. F(1) is attached to F(0) by a central stalk formed by the gamma and epsilon chains, while a peripheral stalk is formed by the delta and b chains.

It localises to the cell inner membrane. F(1)F(0) ATP synthase produces ATP from ADP in the presence of a proton or sodium gradient. F-type ATPases consist of two structural domains, F(1) containing the extramembraneous catalytic core and F(0) containing the membrane proton channel, linked together by a central stalk and a peripheral stalk. During catalysis, ATP synthesis in the catalytic domain of F(1) is coupled via a rotary mechanism of the central stalk subunits to proton translocation. In terms of biological role, this protein is part of the stalk that links CF(0) to CF(1). It either transmits conformational changes from CF(0) to CF(1) or is implicated in proton conduction. The sequence is that of ATP synthase subunit delta from Ehrlichia canis (strain Jake).